We begin with the raw amino-acid sequence, 1433 residues long: Regulatory protein CAT8 (1433 aa).

A compositionally biased stretch (polar residues) spans 20–38 (GSQALSGPSISNRTSSSEA). Residues 20 to 40 (GSQALSGPSISNRTSSSEANP) are disordered. The zn(2)-C6 fungal-type DNA-binding region spans 70 to 97 (CDRCRSKKTRCDGKRPQCSQCAAVGFEC). Polar residues predominate over residues 936 to 946 (KPLFGSQSKNS). Disordered stretches follow at residues 936 to 1024 (KPLF…DTKK), 1137 to 1162 (QNPENSKNNQFHQKGKSTNMEKNNLS), 1200 to 1236 (SASADPGTNKKAVTNAGANFKPPSTGSNTSQGSILGS), and 1324 to 1433 (LNPT…QNAK). Composition is skewed to basic and acidic residues over residues 947–965 (LENRQRTPNVKRENPEHEY) and 994–1005 (LKYEKDAKRNAK). 3 stretches are compositionally biased toward polar residues: residues 1138–1162 (NPENSKNNQFHQKGKSTNMEKNNLS), 1221–1235 (PPSTGSNTSQGSILG), and 1326–1348 (PTDSILSQGMVSSVSTRNTSNQR). Residues 1349-1362 (SLSSGNDSKGDSSS) are compositionally biased toward low complexity. Composition is skewed to polar residues over residues 1363–1391 (QENSKSATGNQLDTPSTLFQMRRTSSGPS) and 1418–1433 (SNTDNVSDLFQWQNAK).

Could be the target of the SNF1/CAT1 - SNF4/CAT3 kinase complex.

It localises to the nucleus. In terms of biological role, activator of the gluconeogenic enzymes FBP1 and PCK1 genes. In Saccharomyces cerevisiae (strain ATCC 204508 / S288c) (Baker's yeast), this protein is Regulatory protein CAT8 (CAT8).